The following is a 294-amino-acid chain: MEQYTKAEILIEALPYICKFHDQKFLIKYGGHAMVNEQARNWIAKDLVLLKYVGINPIVVHGGGPEINRAMEKMGKTPEFIHGLRVTDEETLEIVKMVLIGKINGDIVSKLERYGGKAVGLSGKSGQLIKAKKKIQYLMKDSQKIEIDLGMVGEVEHVDTKLIDILVEKRYIPVISPIGVDHQGNDLNLNADIAAGDIAGAMNAEKLIMVTDVDGIMDDINDQSTLHRRLTISQIEDMIEKGFITGGMIPKIEACINALDKGVQSVHIVNGKTPHAVLLEIFTEEGVGTMIVKE.

Residues 63–64 (GG), Arg-85, and Asn-188 each bind substrate.

Belongs to the acetylglutamate kinase family. ArgB subfamily.

It is found in the cytoplasm. The enzyme catalyses N-acetyl-L-glutamate + ATP = N-acetyl-L-glutamyl 5-phosphate + ADP. It participates in amino-acid biosynthesis; L-arginine biosynthesis; N(2)-acetyl-L-ornithine from L-glutamate: step 2/4. Catalyzes the ATP-dependent phosphorylation of N-acetyl-L-glutamate. This chain is Acetylglutamate kinase, found in Methanococcus maripaludis (strain C6 / ATCC BAA-1332).